A 1131-amino-acid polypeptide reads, in one-letter code: Probable chloride channel protein UM03490-D (1131 aa).

Transmembrane regions (helical) follow at residues 137 to 157 (GVIVLVGILIGLNMGVISLAT), 206 to 226 (VTVTASIGAAAAATDSAPILP), 305 to 325 (FPAWIIYMLFAGLLSFICAHL), 341 to 361 (IKCILAGFVINGYLGFWTLAI), 380 to 397 (GPAVHVACCIGNVVASFF), 414 to 434 (SSAAGVAVAFGSPIGGVLFSL), 485 to 505 (FEIMFYILIGIFGGLYGAFVI), 518 to 538 (YLVKHGVSEVVVLATLTAFVG), 577 to 597 (MVNSLLLATVLRTALVIVSYG), 603 to 623 (GIFVPSMAIGATFGRMVGILV), 643 to 663 (VPCITPGTYAFLGAAAALAGV), and 680 to 702 (ALTYILPTMIVVGITKGVADWFS). Disordered regions lie at residues 815–835 (DGVESSAHGAQQQQPDLLSVA) and 858–928 (ATGA…AGGG). Low complexity predominate over residues 866 to 877 (GLGSTSATGVAS). The region spanning 944–1000 (IDPTPLIVQPGMPLETVMDMFKNLGPRVILVVEYGRLSGLVTVKDVLKRIAMQEKAE) is the CBS domain. A compositionally biased stretch (low complexity) spans 1061-1078 (RASASRGGAPGSQAGQAR). Positions 1061–1131 (RASASRGGAP…VLGAQDDDDE (71 aa)) are disordered. Over residues 1104 to 1113 (STRQTSATKN) the composition is skewed to polar residues.

This sequence belongs to the chloride channel (TC 2.A.49) family.

Its subcellular location is the membrane. Functionally, voltage-gated chloride channel. The protein is Probable chloride channel protein UM03490-D of Mycosarcoma maydis (Corn smut fungus).